The chain runs to 239 residues: Bradykinin-potentiating and C-type natriuretic peptides (239 aa).

A signal peptide spans 1–23 (MFVSRLAASGLLLLALLAVSLDG). Propeptides lie at residues 24–33 (KPVQQWSHKG) and 43–49 (LVVQQWS). Position 50 is a pyrrolidone carboxylic acid (Gln50). Positions 62–64 (VVV) are excised as a propeptide. Gln65 is subject to Pyrrolidone carboxylic acid. Positions 76-82 (LVVQQWS) are excised as a propeptide. Pyrrolidone carboxylic acid is present on Gln83. Positions 95–97 (LVV) are excised as a propeptide. Pyrrolidone carboxylic acid is present on Gln98. Propeptides lie at residues 109-136 (LLKP…AALD) and 148-217 (GSKA…LAKK). The tract at residues 132–205 (EAALDTPPAG…HHAVGGGGGG (74 aa)) is disordered. Over residues 161–171 (SKGASATSAAS) the composition is skewed to low complexity. The segment covering 173–183 (PMRDLRTDGKQ) has biased composition (basic and acidic residues). A disulfide bridge connects residues Cys223 and Cys239.

The protein in the N-terminal section; belongs to the bradykinin-potentiating peptide family. It in the central section; belongs to the bradykinin inhibitor peptide family. This sequence in the C-terminal section; belongs to the natriuretic peptide family. In terms of tissue distribution, expressed by the venom gland.

It is found in the secreted. In terms of biological role, bradykinin-potentiating peptides both inhibit the activity of the angiotensin-converting enzyme (ACE) and enhances the action of bradykinin by inhibiting the peptidases that inactivate it. They act as indirect hypotensive agent. Functionally, inhibits angiotensin-converting enzyme (ACE) activity (IC(50)=4.25 uM), preventing the release of angiotensin and thus indirectly contributing to hypotension. In vivo, induce hypotensive response in both normotensive and hypertensive rats. Antagonizes the vasodilatory actions of bradykinin at the B2 bradykinin receptor (BDKRB2). Its function is as follows. has a vasorelaxant activity in rat aortic strips and a diuretic potency in anesthetized rats. May act by activating natriuretic receptors (NPR1 and/or NPR2). The protein is Bradykinin-potentiating and C-type natriuretic peptides of Lachesis muta muta (Bushmaster).